The primary structure comprises 463 residues: Sugar transporter ERD6-like 7 (463 aa).

The next 12 helical transmembrane spans lie at 26 to 46, 69 to 89, 103 to 123, 126 to 146, 157 to 177, 181 to 201, 264 to 284, 299 to 319, 327 to 347, 357 to 377, 396 to 416, and 426 to 446; these read WMVYLSTFVAVCGSFAFGSCA, LFGSLLTFGAMIGAITSGPIA, AFCVVGWLAIIFAKGVVALDL, LATGYGMGAFSYVVPIFIAEI, TLNQILICTGVSVSFIIGTLV, VLALIGIIPCAASFLGLFFIP, VLIAFGLMVFQQFGGINGICF, LGMIIYAVLQVVITALNAPIV, LLLVSATGLVIGCLIAAVSFY, AVPVLAVVGIMVYIGSFSAGM, VAGGMATLVNWFGAWAVSYTF, and GTFLIYAAINALAIVFVIAIV.

This sequence belongs to the major facilitator superfamily. Sugar transporter (TC 2.A.1.1) family.

It localises to the membrane. Its function is as follows. Sugar transporter. The polypeptide is Sugar transporter ERD6-like 7 (Arabidopsis thaliana (Mouse-ear cress)).